The following is a 602-amino-acid chain: Elongation factor 4 (602 aa).

In terms of domain architecture, tr-type G spans 7–189 (KYIRNFSIVA…AIVNKVPAPE (183 aa)). GTP-binding positions include 19–24 (DHGKST) and 136–139 (NKID).

This sequence belongs to the TRAFAC class translation factor GTPase superfamily. Classic translation factor GTPase family. LepA subfamily.

It is found in the cell membrane. It catalyses the reaction GTP + H2O = GDP + phosphate + H(+). Required for accurate and efficient protein synthesis under certain stress conditions. May act as a fidelity factor of the translation reaction, by catalyzing a one-codon backward translocation of tRNAs on improperly translocated ribosomes. Back-translocation proceeds from a post-translocation (POST) complex to a pre-translocation (PRE) complex, thus giving elongation factor G a second chance to translocate the tRNAs correctly. Binds to ribosomes in a GTP-dependent manner. This Clostridium botulinum (strain Okra / Type B1) protein is Elongation factor 4.